A 288-amino-acid polypeptide reads, in one-letter code: MALFSKKDKYIRITPNNSLKSSVSRNVPEVPDELFAKCPACKHMIYQKDLGPAKICPTCSYNFRISAQERLALTVDEGSFQELFTDIETKDPLRFPDYQAKLQKARQATGLHEAVLTGTALVKGQRLALAIMDSHFIMASMGTVVGEKITRLFELAINERLPVVIFTASGGARMQEGIMSLMQMAKVSAAVKRHSNAGLFYLTILTDPTTGGVTASFAMEGDMIIAEPQSLVGFAGRRVIETTVRENLPDDFQKVEFLKEHGFVDAIVKRTDLRDKIAHLVAFHGGVS.

Residues 34-288 enclose the CoA carboxyltransferase N-terminal domain; the sequence is LFAKCPACKH…HLVAFHGGVS (255 aa). Cys-38, Cys-41, Cys-56, and Cys-59 together coordinate Zn(2+). Residues 38–59 form a C4-type zinc finger; it reads CPACKHMIYQKDLGPAKICPTC.

Belongs to the AccD/PCCB family. Acetyl-CoA carboxylase is a heterohexamer composed of biotin carboxyl carrier protein (AccB), biotin carboxylase (AccC) and two subunits each of ACCase subunit alpha (AccA) and ACCase subunit beta (AccD). Requires Zn(2+) as cofactor.

The protein localises to the cytoplasm. The catalysed reaction is N(6)-carboxybiotinyl-L-lysyl-[protein] + acetyl-CoA = N(6)-biotinyl-L-lysyl-[protein] + malonyl-CoA. It participates in lipid metabolism; malonyl-CoA biosynthesis; malonyl-CoA from acetyl-CoA: step 1/1. In terms of biological role, component of the acetyl coenzyme A carboxylase (ACC) complex. Biotin carboxylase (BC) catalyzes the carboxylation of biotin on its carrier protein (BCCP) and then the CO(2) group is transferred by the transcarboxylase to acetyl-CoA to form malonyl-CoA. The protein is Acetyl-coenzyme A carboxylase carboxyl transferase subunit beta of Streptococcus equi subsp. zooepidemicus (strain H70).